Reading from the N-terminus, the 73-residue chain is uncharacterized protein (73 aa).

Residues Val-54–Ile-72 form a helical membrane-spanning segment.

The protein localises to the membrane. This is an uncharacterized protein from Saccharomyces cerevisiae (strain ATCC 204508 / S288c) (Baker's yeast).